An 84-amino-acid chain; its full sequence is Large ribosomal subunit protein bL27 (84 aa).

Residues 1 to 24 (MAHKKAGGSSRNGRDSKGQRLGCK) form a disordered region.

This sequence belongs to the bacterial ribosomal protein bL27 family.

In Pelobacter propionicus (strain DSM 2379 / NBRC 103807 / OttBd1), this protein is Large ribosomal subunit protein bL27.